We begin with the raw amino-acid sequence, 144 residues long: Noggin (144 aa).

Positions 1-4 (GGGG) are cleaved as a signal peptide. 4 disulfide bridges follow: cysteine 67–cysteine 104, cysteine 90–cysteine 140, cysteine 96–cysteine 142, and cysteine 119–cysteine 127.

It belongs to the noggin family. As to quaternary structure, homodimer. Interacts with GDF5; inhibits chondrocyte differentiation. Prominently expressed in the CNS. High levels found in mitral and tufted cells in the olfactory bulb, piriform cortex of the brain and Purkinje cells in the cerebellum. Low level expression seen in the lung, skeletal muscle and skin.

Its subcellular location is the secreted. Functionally, essential for cartilage morphogenesis and joint formation. Inhibitor of bone morphogenetic proteins (BMP) signaling which is required for growth and patterning of the neural tube and somite. Inhibits chondrocyte differentiation through its interaction with GDF5 and, probably, GDF6. The polypeptide is Noggin (Nog) (Rattus norvegicus (Rat)).